The primary structure comprises 220 residues: Ribonuclease HII (220 aa).

Residues 32–220 (KHIAGIDEAG…FAPIKGRFDC (189 aa)) enclose the RNase H type-2 domain. A divalent metal cation is bound by residues Asp-38, Glu-39, and Asp-130.

It belongs to the RNase HII family. The cofactor is Mn(2+). Requires Mg(2+) as cofactor.

The protein localises to the cytoplasm. It catalyses the reaction Endonucleolytic cleavage to 5'-phosphomonoester.. Its function is as follows. Endonuclease that specifically degrades the RNA of RNA-DNA hybrids. This Brucella ovis (strain ATCC 25840 / 63/290 / NCTC 10512) protein is Ribonuclease HII.